Consider the following 556-residue polypeptide: DNA ligase B (556 aa).

Lys122 serves as the catalytic N6-AMP-lysine intermediate.

This sequence belongs to the NAD-dependent DNA ligase family. LigB subfamily.

It catalyses the reaction NAD(+) + (deoxyribonucleotide)n-3'-hydroxyl + 5'-phospho-(deoxyribonucleotide)m = (deoxyribonucleotide)n+m + AMP + beta-nicotinamide D-nucleotide.. Its function is as follows. Catalyzes the formation of phosphodiester linkages between 5'-phosphoryl and 3'-hydroxyl groups in double-stranded DNA using NAD as a coenzyme and as the energy source for the reaction. The sequence is that of DNA ligase B from Enterobacter sp. (strain 638).